The sequence spans 556 residues: 2-succinyl-5-enolpyruvyl-6-hydroxy-3-cyclohexene-1-carboxylate synthase (556 aa).

Belongs to the TPP enzyme family. MenD subfamily. Homodimer. Mg(2+) serves as cofactor. It depends on Mn(2+) as a cofactor. The cofactor is thiamine diphosphate.

It carries out the reaction isochorismate + 2-oxoglutarate + H(+) = 5-enolpyruvoyl-6-hydroxy-2-succinyl-cyclohex-3-ene-1-carboxylate + CO2. It functions in the pathway quinol/quinone metabolism; 1,4-dihydroxy-2-naphthoate biosynthesis; 1,4-dihydroxy-2-naphthoate from chorismate: step 2/7. It participates in quinol/quinone metabolism; menaquinone biosynthesis. Its function is as follows. Catalyzes the thiamine diphosphate-dependent decarboxylation of 2-oxoglutarate and the subsequent addition of the resulting succinic semialdehyde-thiamine pyrophosphate anion to isochorismate to yield 2-succinyl-5-enolpyruvyl-6-hydroxy-3-cyclohexene-1-carboxylate (SEPHCHC). This Escherichia coli (strain 55989 / EAEC) protein is 2-succinyl-5-enolpyruvyl-6-hydroxy-3-cyclohexene-1-carboxylate synthase.